The following is a 922-amino-acid chain: Isoleucine--tRNA ligase (922 aa).

Positions 58–68 match the 'HIGH' region motif; that stretch reads PYANGDIHIGH. Glu552 is a binding site for L-isoleucyl-5'-AMP. The short motif at 593–597 is the 'KMSKS' region element; the sequence is KMSKS. Residue Lys596 participates in ATP binding. Positions 885, 888, 905, and 908 each coordinate Zn(2+).

It belongs to the class-I aminoacyl-tRNA synthetase family. IleS type 1 subfamily. Monomer. It depends on Zn(2+) as a cofactor.

Its subcellular location is the cytoplasm. It catalyses the reaction tRNA(Ile) + L-isoleucine + ATP = L-isoleucyl-tRNA(Ile) + AMP + diphosphate. Catalyzes the attachment of isoleucine to tRNA(Ile). As IleRS can inadvertently accommodate and process structurally similar amino acids such as valine, to avoid such errors it has two additional distinct tRNA(Ile)-dependent editing activities. One activity is designated as 'pretransfer' editing and involves the hydrolysis of activated Val-AMP. The other activity is designated 'posttransfer' editing and involves deacylation of mischarged Val-tRNA(Ile). The chain is Isoleucine--tRNA ligase from Ruthia magnifica subsp. Calyptogena magnifica.